A 551-amino-acid polypeptide reads, in one-letter code: Trehalose-6-phosphate hydrolase (551 aa).

Asp-200 serves as the catalytic Nucleophile. Glu-251 functions as the Proton donor in the catalytic mechanism.

It belongs to the glycosyl hydrolase 13 family.

The protein localises to the cytoplasm. It carries out the reaction alpha,alpha-trehalose 6-phosphate + H2O = D-glucose 6-phosphate + D-glucose. Functionally, hydrolyzes trehalose-6-phosphate to glucose and glucose 6-phosphate. Can also very effectively hydrolyze p-nitrophenyl-alpha-D-glucopyranoside, but it does not recognize trehalose, sucrose, maltose, isomaltose, or maltodextrins. This chain is Trehalose-6-phosphate hydrolase (treC), found in Escherichia coli (strain K12).